We begin with the raw amino-acid sequence, 122 residues long: Acidic phospholipase A2 (122 aa).

7 disulfides stabilise this stretch: C26/C115, C28/C44, C43/C95, C49/C122, C50/C88, C57/C81, and C75/C86. The Ca(2+) site is built by Y27, G29, and G31. Residue H47 is part of the active site. A Ca(2+)-binding site is contributed by D48. D89 is an active-site residue.

It depends on Ca(2+) as a cofactor. As to expression, expressed by the venom gland.

Its subcellular location is the secreted. The enzyme catalyses a 1,2-diacyl-sn-glycero-3-phosphocholine + H2O = a 1-acyl-sn-glycero-3-phosphocholine + a fatty acid + H(+). In terms of biological role, PLA2 catalyzes the calcium-dependent hydrolysis of the 2-acyl groups in 3-sn-phosphoglycerides. The chain is Acidic phospholipase A2 from Lachesis stenophrys (Central American bushmaster).